A 206-amino-acid polypeptide reads, in one-letter code: MVVKKIALFGATGNTGLTTLAQAVQAGYEVTVLVRDPSRLPSEGPQPAHVVVGDVRQPADVDKTVAGQDAVIVLLGTRNDLSPTTVMSEGAQNIVAAMKAHGVDKVVACTSAFLLWDPSKVPPRLQDVTDDHIRMHKVLQQSGLKYVAVMPPHIGDHPLTGAYTVTLDGRGPSRVISKHDLGHFMLHCLTTDKYDGHTTYPSHVYE.

8 residues coordinate NADP(+): Gly-10, Thr-12, Gly-13, Asn-14, Thr-15, Arg-35, Ser-38, and Arg-39. Position 42 is a phosphoserine (Ser-42). Residues Asp-54, Val-55, Leu-75, Gly-76, and Arg-78 each contribute to the NADP(+) site. Phosphoserine is present on Ser-82. 5 residues coordinate NADP(+): Met-87, Cys-109, His-132, His-153, and Ile-154. The active-site S-nitroso-cysteine intermediate; for S-nitroso-CoA-dependent nitrosyltransferase activity is the Cys-109. The S-nitroso-cysteine intermediate; for S-nitroso-CoA-dependent nitrosyltransferase activity role is filled by Cys-188.

As to quaternary structure, monomer. As to expression, at least expressed in the liver and erythrocyte.

The protein localises to the cytoplasm. The enzyme catalyses reduced riboflavin + NADP(+) = riboflavin + NADPH + 2 H(+). It catalyses the reaction bilirubin IXbeta + NADP(+) = biliverdin IXbeta + NADPH + H(+). The catalysed reaction is FMNH2 + NAD(+) = FMN + NADH + 2 H(+). It carries out the reaction FMNH2 + NADP(+) = FMN + NADPH + 2 H(+). The enzyme catalyses S-nitroso-CoA + L-cysteinyl-[protein] = S-nitroso-L-cysteinyl-[protein] + CoA. It catalyses the reaction L-cysteinyl-[SCAN] + S-nitroso-CoA = S-nitroso-L-cysteinyl-[SCAN] + CoA. The catalysed reaction is S-nitroso-L-cysteinyl-[SCAN] + L-cysteinyl-[protein] = L-cysteinyl-[SCAN] + S-nitroso-L-cysteinyl-[protein]. Enzyme that can both act as a NAD(P)H-dependent reductase and a S-nitroso-CoA-dependent nitrosyltransferase. Promotes fetal heme degradation during development. Also expressed in adult tissues, where it acts as a regulator of hematopoiesis, intermediary metabolism (glutaminolysis, glycolysis, TCA cycle and pentose phosphate pathway) and insulin signaling. Has a broad specificity oxidoreductase activity by catalyzing the NAD(P)H-dependent reduction of a variety of flavins, such as riboflavin, FAD or FMN, biliverdins, methemoglobin and PQQ (pyrroloquinoline quinone). Contributes to fetal heme catabolism by catalyzing reduction of biliverdin IXbeta into bilirubin IXbeta in the liver. Biliverdin IXbeta, which constitutes the major heme catabolite in the fetus is not present in adult. Does not reduce bilirubin IXalpha. Can also reduce the complexed Fe(3+) iron to Fe(2+) in the presence of FMN and NADPH. Acts as a protein nitrosyltransferase by catalyzing nitrosylation of cysteine residues of target proteins, such as HMOX2, INSR and IRS1. S-nitroso-CoA-dependent nitrosyltransferase activity is mediated via a 'ping-pong' mechanism: BLVRB first associates with both S-nitroso-CoA and protein substrate, nitric oxide group is then transferred from S-nitroso-CoA to Cys-109 and Cys-188 residues of BLVRB and from S-nitroso-BLVRB to the protein substrate. Inhibits insulin signaling by mediating nitrosylation of INSR and IRS1, leading to their inhibition. This chain is Flavin reductase (NADPH) (BLVRB), found in Bos taurus (Bovine).